The chain runs to 159 residues: Ribonuclease H (159 aa).

Residues 10–153 (TQTQVVIYTD…ADALANQGVE (144 aa)) enclose the RNase H type-1 domain. Residues Asp19, Glu57, Asp79, and Asp145 each contribute to the Mg(2+) site.

It belongs to the RNase H family. As to quaternary structure, monomer. It depends on Mg(2+) as a cofactor.

It is found in the cytoplasm. It carries out the reaction Endonucleolytic cleavage to 5'-phosphomonoester.. Its function is as follows. Endonuclease that specifically degrades the RNA of RNA-DNA hybrids. The protein is Ribonuclease H of Polaromonas sp. (strain JS666 / ATCC BAA-500).